Here is a 209-residue protein sequence, read N- to C-terminus: Endonuclease III (209 aa).

A HhH domain is found at 108-127 (RTELESLPGVGRKTANIILN). Positions 187, 194, 197, and 203 each coordinate [4Fe-4S] cluster.

This sequence belongs to the Nth/MutY family. It depends on [4Fe-4S] cluster as a cofactor.

It catalyses the reaction 2'-deoxyribonucleotide-(2'-deoxyribose 5'-phosphate)-2'-deoxyribonucleotide-DNA = a 3'-end 2'-deoxyribonucleotide-(2,3-dehydro-2,3-deoxyribose 5'-phosphate)-DNA + a 5'-end 5'-phospho-2'-deoxyribonucleoside-DNA + H(+). In terms of biological role, DNA repair enzyme that has both DNA N-glycosylase activity and AP-lyase activity. The DNA N-glycosylase activity releases various damaged pyrimidines from DNA by cleaving the N-glycosidic bond, leaving an AP (apurinic/apyrimidinic) site. The AP-lyase activity cleaves the phosphodiester bond 3' to the AP site by a beta-elimination, leaving a 3'-terminal unsaturated sugar and a product with a terminal 5'-phosphate. This chain is Endonuclease III, found in Buchnera aphidicola subsp. Schizaphis graminum (strain Sg).